A 394-amino-acid polypeptide reads, in one-letter code: MDFPLANLFFVPSEDATAFGRRLRAAAQQAPIVFDTAFGMPILLRKSHITTAYRDTATFSTRMFQAGILNGGLAAMQGDEHARMRRVYNMFFLPRAVSQYEERFVRPISEQVVDRLAGKPRVDLLEDFAMELPRRVIGELFGFPAEKLHETDERVRAMLRGLVRMHDPAAVAESQRAYGETLGLITEVVERESRDTSDTLLGEILRTLKAEHMDTIEASRQIVLSLILGGYETTSWLVANTIHALLAHPDTLARVRQDPSLLPAAIEEGMRWCPSSFGVLRMVERDVRLDDQALSAGTVVCLAGIAGNYDETAYPSPEVYDIDRKPLPAANVFGGGAHFCVGAPLARMEARVGLQALLARFPGLRAVPEERPSFMYGAKDSVAHGPDKLPVLLH.

Positions 81, 85, 281, 335, 338, and 340 each coordinate heme b.

This sequence belongs to the cytochrome P450 family. The cofactor is heme b.

It catalyses the reaction testosterone + 2 reduced [2Fe-2S]-[ferredoxin] + O2 + 2 H(+) = 1alpha-hydroxytestosterone + 2 oxidized [2Fe-2S]-[ferredoxin] + H2O. The catalysed reaction is androst-4-ene-3,17-dione + 2 reduced [2Fe-2S]-[ferredoxin] + O2 + 2 H(+) = 1alpha-hydroxyandrost-4-ene-3,17-dione + 2 oxidized [2Fe-2S]-[ferredoxin] + H2O. Its function is as follows. Hydroxylase that can catalyze the in vitro conversion of the sesquiterpenoid nootkatone, a natural organic compound produced by some plants, to at least five hydrophilic products. The native ferredoxin reductase FdR_B and either Fdx2 or Fdx8 ferredoxins can act as the redox partners for the conversion of nootkatone. Functionally, in addition, acts as a steroid 1alpha-hydroxylase, when associated in vitro with the surrogate redox partners bovine adrenodoxin (Adx) and adrenodoxin reductase (Adr). Acts on several C-19 steroid substrates, including testosterone and androstenedione, which are hydroxylated to 1alpha-hydroxytestosterone and 1alpha-hydroxyandrostenedione, respectively. Can use their derivatives testosterone-acetate and 11-oxoandrostenedione, but not vitamin D3 and 25-hydroxyvitamin D3. Also catalyzes the hydroxylation of the C-21 steroid 11-deoxycorticosterone to 1alpha-hydroxy-11-deoxycorticosterone. Catalyzes the hydroxylation of the C-21 steroid progesterone, leading to the formation of seven products: two major (1alpha-hydroxyprogesterone and 17alpha-hydroxyprogesterone) and five minor products. The polypeptide is C-19 steroid 1alpha-hydroxylase (Sorangium cellulosum (strain So ce56) (Polyangium cellulosum (strain So ce56))).